We begin with the raw amino-acid sequence, 2170 residues long: MAFCTQLMLLLWKNYTYRRRQPIQLVVELLWPLFLFFILVAVRHSHPPLEHHECHFPNKPLPSAGTVPWLQGLVCNVNNSCFQHPTPGEKPGVLSNFKDSLISRLLADAHTVLGGHSTQDMLAALGKLIPVLRAVGSGAWPQESNQPAKQGSVTELLEKILQRASLETVLGQAQDSMRKFSDATRTVAQELLTLPSLVELRALLRRPRGSAGSLELISEALCSTKGPSSPGGLSLNWYEANQINEFMGPELAPTLPDSSLSPACSEFVGALDDHPVSRLLWRRLKPLILGKILFAPDTNFTRKLMAQVNQTFEELALLRDLHELWGVLGPQIFNFMNDSTNVAMLQKLLDVEGTGWQQQTPKGQKQLEAIRDFLDPSRGRYNWQEAHADMGRLAEILGQILECVSLDKLEAVPSEEALVSRALELLGERRLWAGIVFLSPEHPLDSSEPPSPTTTGPGHLRVKIRMDIDDVTRTNKIRDKFWDPGPSADPLMDLRYVWGGFVYLQDLLEQAAVRVLSGRDSRAGLYLQQMPHPCYVDDVFLRVLSRSLPLFLTLAWIYSVALTVKAVVREKETRLRETMRAMGLSRAVLWLGWFLSCLGPFLVSAALLVLVLKLGNILPYSHPVVVFLFLAAFAVATVAQSFLLSAFFSRANLAAACGGLAYFALYLPYVLCVAWRERLPLGGLLAVSLLSPVAFGFGCESLALLEEQGDGAQWHNLGTGPAEDVFSLAQVSAFLLLDAVIYGLALWYLEAVCPGQYGIPEPWNFPFRRSYWCGPGPPKSSVLAPAPQDPKVLVEEPPPGLVPGVSIRGLKKHFRGSPQPALRGLNLDFYEGHITAFLGHNGAGKTTTLSILSGLFPPSSGSASILGHDVQTNMAAIRPHLGICPQYNVLFDMLTVEEHVWFYGRLKGVSAAAIDSEQEHLIRDVGLIPKRDTQTRHLSGGMQRKLSVAIAFVGGSRVVIMDEPTAGVDPASRRGIWELLLKYREGRTLILSTHHLDEAELLGDRVAMVASGSLCCCGSPLFLRRHLGCGYYLTLVKSSQSLVTHDLKGDTEDPRREKKSGSEGKTADTVLTRDGPHRSSQVPAPDAVPVTPSAALILELVQRHVPGAQLVEELPHELVLALPYAGALDGSFATVFQELDQQLERLGLTGYGISDTNLEEIFLKVVEEAHAHGEGGDPRQQQHLLTATPQPHTGPEASVLENGELAKLVLDPQAPKGSAPTTAQVQGWTLTCQQLRALLHKRFLLARRSRRGLFAQIVLPALFVGLALFFTLIVPPFGQYPPLQLSPAMYGPQVSFFSEDAPADPNRMKLLEALLGEAGLQDPSVQGKGSRGSECTHSLACYFTVPEVPPDVASILASGNWTPDSPSPACQCSQPGARRLLPDCPAGAGGPPPPQAMAGFGEVVQNLTGRNVSDFLVKTYPSLVRRGLKTKKWVDEVRYGGFSLGGRDPDLPSGREVVRTVAEMRALLSPQPGNTLDRILNNLTQWALGLDARNSLKIWFNNKGWHAMVAFVNRANNGLLRAFLPSGSVRHAHSITTLNHPLNLTKEQLSEATLIASSVDVLVSICVVFAMSFVPASFTLVLIEERITRAKHLQLVSGLPQTLYWLGNFLWDMCNYLVAVCIVVLIFLAFQQKAYVAPENLPALLLLLLLYGWSITPLMYPASFFFSVPSTAYVVLTCINLFIGINSSMATFVLELLSDQNLQEVSRILKQVFLIFPHFCLGRGLIDMVRNQAMADAFERLGDKQFQSPLRWDIIGKNLLAMVAQGPLFLLITLLLQHRNRLLPQPKSRLPPPLGEEDEDVVRERERVTKGATQGDVLVLRDLTKVYRGQRSPAVDHLCLGIPPGECFGLLGVNGAGKTSTFRMVTGDTLPSSGEAVLAGHNVAQEPSAAHRSMGYCPQSDAIFDLLTGREHLELFARLRGVPEAQVAQTALSGLVRLGLPSYADRPAGTYSGGNKRKLATALALVGDPAVVFLDEPTTGMDPSARRFLWNNLLSVVREGRSVVLTSHSMEECEALCTRLAIMVNGRFRCLGSAQHLKSRFGAGHTLTLRVPPDQPEPAIAFIVTTFPDAELREVHGSRLRFQLPPGGGCTLARVFRELAAQGKAHGVEDFSVSQTTLEEVFLYFSKDQGEEEEGSGQETETREVSTPGLQHPKRVSRFLEDPSSVETVI.

Residues 22 to 42 (PIQLVVELLWPLFLFFILVAV) form a helical membrane-spanning segment. The Extracellular portion of the chain corresponds to 43–547 (RHSHPPLEHH…DVFLRVLSRS (505 aa)). Residues Cys-75 and Cys-222 are joined by a disulfide bond. N-linked (GlcNAc...) asparagine glycosylation occurs at Asn-309. 6 consecutive transmembrane segments (helical) span residues 548–568 (LPLF…KAVV), 591–611 (LGWF…LVLV), 624–644 (VVVF…SFLL), 653–673 (LAAA…VLCV), 679–699 (LPLG…GFGC), and 733–753 (AFLL…EAVC). Residues 805–1036 (VSIRGLKKHF…LGCGYYLTLV (232 aa)) form the ABC transporter 1 domain. ATP is bound at residue 839–846 (GHNGAGKT). A helical transmembrane segment spans residues 847-867 (TTLSILSGLFPPSSGSASILG). The interval 1044 to 1086 (THDLKGDTEDPRREKKSGSEGKTADTVLTRDGPHRSSQVPAPD) is disordered. A compositionally biased stretch (basic and acidic residues) spans 1045–1066 (HDLKGDTEDPRREKKSGSEGKT). Residues 1257–1277 (IVLPALFVGLALFFTLIVPPF) form a helical membrane-spanning segment. Residues 1278 to 1562 (GQYPPLQLSP…TLIASSVDVL (285 aa)) are Extracellular-facing. Cys-1370 and Cys-1384 are joined by a disulfide. 6 helical membrane-spanning segments follow: residues 1563–1583 (VSIC…LVLI), 1609–1629 (FLWD…IFLA), 1646–1666 (LLLL…SFFF), 1674–1694 (VVLT…TFVL), 1708–1728 (ILKQ…LIDM), and 1754–1774 (IIGK…LITL). In terms of domain architecture, ABC transporter 2 spans 1818–2050 (LVLRDLTKVY…FGAGHTLTLR (233 aa)). 1852–1859 (GVNGAGKT) is an ATP binding site. Residues 2129-2170 (QGEEEEGSGQETETREVSTPGLQHPKRVSRFLEDPSSVETVI) form a disordered region.

The protein belongs to the ABC transporter superfamily. ABCA family. Post-translationally, N-glycosylated. As to expression, expressed in blood cells. Also detected in brain and ovary tissues (at protein level). Expressed in platelet.

It localises to the cell membrane. Its subcellular location is the golgi apparatus membrane. The protein localises to the early endosome membrane. It is found in the cell projection. The protein resides in the ruffle membrane. It localises to the phagocytic cup. Its subcellular location is the cytoplasm. ATP-binding cassette (ABC) transporter that plays a role in lipid homeostasis and macrophage-mediated phagocytosis. Binds APOA1 and may function in apolipoprotein-mediated phospholipid efflux from cells. May also mediate cholesterol efflux. May regulate cellular ceramide homeostasis during keratinocyte differentiation. Involved in lipid raft organization and CD1D localization on thymocytes and antigen-presenting cells, which plays an important role in natural killer T-cell development and activation. Plays a role in phagocytosis of apoptotic cells by macrophages. Macrophage phagocytosis is stimulated by APOA1 or APOA2, probably by stabilization of ABCA7. Also involved in phagocytic clearance of amyloid-beta by microglia cells and macrophages. Further limits amyloid-beta production by playing a role in the regulation of amyloid-beta A4 precursor protein (APP) endocytosis and/or processing. This Rattus norvegicus (Rat) protein is ATP-binding cassette sub-family A member 7 (Abca7).